Reading from the N-terminus, the 127-residue chain is uncharacterized protein (127 aa).

2 helical membrane-spanning segments follow: residues 42-62 and 78-98; these read LLISNFAGLGIAFIYCLIAFI and GLPIILCSTLMLVGNILYYFL.

Its subcellular location is the membrane. This is an uncharacterized protein from Schizosaccharomyces pombe (strain 972 / ATCC 24843) (Fission yeast).